Reading from the N-terminus, the 850-residue chain is Bifunctional levopimaradiene synthase, chloroplastic (850 aa).

The N-terminal 52 residues, 1–52 (MALPSSSLSSQIHTGATTQCIPHFHGSLNAGTSAGKRRSLYLRWGKGPSKIV), are a transit peptide targeting the chloroplast. Residue K250 coordinates substrate. Mg(2+) contacts are provided by D383 and D385. The short motif at 383 to 386 (DIDD) is the DXDD motif element. K470 serves as a coordination point for substrate. D602, D606, N746, T750, and E754 together coordinate Mg(2+). The DDXXD motif signature appears at 602 to 606 (DDLYD).

This sequence belongs to the terpene synthase family. Tpsd subfamily. Requires Mg(2+) as cofactor. Expressed in young tissues such as flushing buds and green bark tissues. Lower levels in mature needles and bark.

It localises to the plastid. Its subcellular location is the chloroplast. The enzyme catalyses (2E,6E,10E)-geranylgeranyl diphosphate = (+)-copalyl diphosphate. It catalyses the reaction (+)-copalyl diphosphate = abieta-8(14),12-diene + diphosphate. The catalysed reaction is (+)-copalyl diphosphate = neoabietadiene + diphosphate. Its pathway is terpene metabolism; oleoresin biosynthesis. Its function is as follows. Involved in defensive oleoresin formation in conifers in response to insect attack or other injury. Involved in diterpene (C20) olefins biosynthesis. Bifunctional enzyme that catalyzes two sequential cyclizations of geranylgeranyl diphosphate (GGPP) to levopimaradiene. Levopimaradiene is the major products of the enzyme followed by abietadiene, neoabietadiene and palustradiene. No activity with geranyl diphosphate (GPP) or farnesyl diphosphate (FPP) as substrate. This Pinus taeda (Loblolly pine) protein is Bifunctional levopimaradiene synthase, chloroplastic (LPS).